The sequence spans 236 residues: MDLQNQMKKAVAQAAVDQIQNGMILGLGSGSTAALMIEALAIKIKSGEIKDVVGVTTSFQGEVLASELGIPLKSLSSVSEIDLAIDGADEVNPKFQLIKGGGACHVQEKLVAALAKKFIVVVDSTKLVEKLNLDFKLPVEVLPSAWKQVQKTLINLGGEGNLRMAQKKAGPIVTDQGNLILDLTFRNGIDKPELLESQINNIPGVLENGLFVNLTDEVLVGKVESDVVGVESLKKI.

Substrate contacts are provided by residues 29 to 32, 86 to 89, and 99 to 102; these read SGST, DGAD, and KGGG. Glu108 serves as the catalytic Proton acceptor. Residue Lys126 coordinates substrate.

Belongs to the ribose 5-phosphate isomerase family. In terms of assembly, homodimer.

It catalyses the reaction aldehydo-D-ribose 5-phosphate = D-ribulose 5-phosphate. It participates in carbohydrate degradation; pentose phosphate pathway; D-ribose 5-phosphate from D-ribulose 5-phosphate (non-oxidative stage): step 1/1. Catalyzes the reversible conversion of ribose-5-phosphate to ribulose 5-phosphate. This chain is Ribose-5-phosphate isomerase A, found in Prochlorococcus marinus (strain NATL2A).